Reading from the N-terminus, the 183-residue chain is Ras-related protein Rap-2a (183 aa).

10–17 (GSGGVGKS) contributes to the GTP binding site. The short motif at 32–40 (YDPTIEDFY) is the Effector region element. GTP is bound by residues 57–61 (DTAGT) and 116–119 (NKVD). Residues C176 and C177 are each lipidated (S-palmitoyl cysteine). C180 carries the cysteine methyl ester modification. Residue C180 is the site of S-farnesyl cysteine attachment. A propeptide spans 181–183 (VIL) (removed in mature form).

The protein belongs to the small GTPase superfamily. Ras family. Interacts (GTP-bound form) with RUNDC3A. Interacts with PLCE1. Interacts with ARHGAP29, SGSM1, SGSM2 and SGSM3. Interacts (GTP-bound form preferentially) with TNIK (via the CNH domain); the interaction is direct and recruits RAP2A to the E3 ubiquitin ligase NEDD4. Interacts with MINK1. Interacts (GTP-bound form preferentially) with MAP4K4. Interacts with cytoskeletal actin. Interacts with RGS14; the interaction is GTP-dependent. In terms of processing, ubiquitinated; undergoes 'Lys-63' monoubiquitination and diubiquitination by NEDD4. Multiple lysine residues are probably modified. Ubiquitination requires TNIK, prevents interaction with effectors and inactivates RAP2A. Ubiquitination by the ECS(RAB40B) complex leads to RAP2A localization to lamellipodia plasma membrane, activation, and regulation of sorting at early endosomes for recycling to the lamellipodia plasma membrane. Palmitoylated. Palmitoylation is required for association with recycling endosome membranes and activation of TNIK.

The protein resides in the midbody. It is found in the cell projection. The protein localises to the lamellipodium membrane. It localises to the golgi apparatus. Its subcellular location is the recycling endosome membrane. The protein resides in the lysosome. The catalysed reaction is GTP + H2O = GDP + phosphate + H(+). With respect to regulation, activated by the guanine nucleotide-exchange factors RAPGEF3 and RAPGEF4 in a cAMP-dependent manner. Nucleotide exchange is also specifically stimulated by RAPGEF5, RASGEF1A and RASGEF1B. Its function is as follows. Small GTP-binding protein which cycles between a GDP-bound inactive and a GTP-bound active form. In its active form interacts with and regulates several effectors including MAP4K4, MINK1 and TNIK. Part of a signaling complex composed of NEDD4, RAP2A and TNIK which regulates neuronal dendrite extension and arborization during development. More generally, it is part of several signaling cascades and may regulate cytoskeletal rearrangements, cell migration, cell adhesion and cell spreading. The protein is Ras-related protein Rap-2a (RAP2A) of Sus scrofa (Pig).